We begin with the raw amino-acid sequence, 213 residues long: MSTIVKICGLTTADTLEAAVEAGADMVGFVFFPASPRHLDIDFADALGRQVRSRAAKVALTVDADDDLLDAIVEQLRPNWLQFHGSESPERVRSIKRIYGLPVMKAIAVAGPDDLSVLPDYAAVADRILFDARPPKDATRPGGLGAAFDWKLLDGVNLKLPFLVSGGINAGNVAEALRVTRAQGVDVSSGVETSPGEKDPDLIRDFIRAARAA.

The protein belongs to the TrpF family.

It catalyses the reaction N-(5-phospho-beta-D-ribosyl)anthranilate = 1-(2-carboxyphenylamino)-1-deoxy-D-ribulose 5-phosphate. Its pathway is amino-acid biosynthesis; L-tryptophan biosynthesis; L-tryptophan from chorismate: step 3/5. The polypeptide is N-(5'-phosphoribosyl)anthranilate isomerase (Rhodopseudomonas palustris (strain ATCC BAA-98 / CGA009)).